Reading from the N-terminus, the 180-residue chain is MIIYLHGFDSNSPGNHEKVLQLQFIDPDVRLISYSTRHPKHDMQHLLKEVDKMLQLNVDERPLICGVGLGGYWAERIGFLCDIRQVIFNPNLFPYENMEGKIDRPEEYADIATKCVTNFREKNRDRCLVILSRNDEALNSQRTSEELHHYYEIVWDEEQTHKFKNISPHLQRIKAFKTLG.

This sequence belongs to the UPF0227 family.

The chain is UPF0227 protein YcfP from Escherichia coli O139:H28 (strain E24377A / ETEC).